The primary structure comprises 219 residues: Thiamine-phosphate synthase (219 aa).

4-amino-2-methyl-5-(diphosphooxymethyl)pyrimidine-binding positions include 44–48 (QFREK) and N79. Positions 80 and 99 each coordinate Mg(2+). S117 lines the 4-amino-2-methyl-5-(diphosphooxymethyl)pyrimidine pocket. 143-145 (TST) serves as a coordination point for 2-[(2R,5Z)-2-carboxy-4-methylthiazol-5(2H)-ylidene]ethyl phosphate. Position 146 (K146) interacts with 4-amino-2-methyl-5-(diphosphooxymethyl)pyrimidine. 2-[(2R,5Z)-2-carboxy-4-methylthiazol-5(2H)-ylidene]ethyl phosphate is bound by residues G175 and 195–196 (IS).

Belongs to the thiamine-phosphate synthase family. It depends on Mg(2+) as a cofactor.

The catalysed reaction is 2-[(2R,5Z)-2-carboxy-4-methylthiazol-5(2H)-ylidene]ethyl phosphate + 4-amino-2-methyl-5-(diphosphooxymethyl)pyrimidine + 2 H(+) = thiamine phosphate + CO2 + diphosphate. The enzyme catalyses 2-(2-carboxy-4-methylthiazol-5-yl)ethyl phosphate + 4-amino-2-methyl-5-(diphosphooxymethyl)pyrimidine + 2 H(+) = thiamine phosphate + CO2 + diphosphate. It catalyses the reaction 4-methyl-5-(2-phosphooxyethyl)-thiazole + 4-amino-2-methyl-5-(diphosphooxymethyl)pyrimidine + H(+) = thiamine phosphate + diphosphate. The protein operates within cofactor biosynthesis; thiamine diphosphate biosynthesis; thiamine phosphate from 4-amino-2-methyl-5-diphosphomethylpyrimidine and 4-methyl-5-(2-phosphoethyl)-thiazole: step 1/1. Condenses 4-methyl-5-(beta-hydroxyethyl)thiazole monophosphate (THZ-P) and 2-methyl-4-amino-5-hydroxymethyl pyrimidine pyrophosphate (HMP-PP) to form thiamine monophosphate (TMP). This is Thiamine-phosphate synthase from Bacillus anthracis (strain A0248).